Consider the following 373-residue polypeptide: NADPH-dependent 3-keto-steroid reductase HSD3B3 (373 aa).

Residues 10–15 (GAGGFL), Tyr-155, and Lys-159 each bind NADP(+). The active-site Proton donor is the Lys-159. A helical transmembrane segment spans residues 288–308 (VALLYWFGFLLETVSFLLRPV).

This sequence belongs to the 3-beta-HSD family. High levels in adrenal gland, kidney and male liver (at protein level). Low levels in female liver (at protein level). Expressed in ovaries (at protein level).

The protein resides in the endoplasmic reticulum membrane. It is found in the mitochondrion membrane. It catalyses the reaction a 3beta-hydroxysteroid + NADP(+) = a 3-oxosteroid + NADPH + H(+). The catalysed reaction is 5alpha-androstane-3beta,17beta-diol + NADP(+) = 17beta-hydroxy-5alpha-androstan-3-one + NADPH + H(+). It participates in steroid metabolism. Its function is as follows. Responsible for the reduction of the oxo group on the C-3 of 5alpha-androstane steroids. Catalyzes the conversion of dihydrotestosterone to its inactive form 5alpha-androstanediol, that does not bind androgen receptor/AR. Does not function as an isomerase. This is NADPH-dependent 3-keto-steroid reductase HSD3B3 (HSD3B3) from Mesocricetus auratus (Golden hamster).